Here is a 563-residue protein sequence, read N- to C-terminus: Chaperonin GroEL 1 (563 aa).

Residues 29–32, 86–90, G413, 476–478, and D492 each bind ATP; these read TIGP, DGTTT, and NAA. The segment at 520 to 545 is disordered; it reads DKPEPPSPAGGEGGGDPMGGMGGMGG. The segment covering 529–545 has biased composition (gly residues); that stretch reads GGEGGGDPMGGMGGMGG.

This sequence belongs to the chaperonin (HSP60) family. Forms a cylinder of 14 subunits composed of two heptameric rings stacked back-to-back. Interacts with the co-chaperonin GroES.

The protein localises to the cytoplasm. The catalysed reaction is ATP + H2O + a folded polypeptide = ADP + phosphate + an unfolded polypeptide.. In terms of biological role, together with its co-chaperonin GroES, plays an essential role in assisting protein folding. The GroEL-GroES system forms a nano-cage that allows encapsulation of the non-native substrate proteins and provides a physical environment optimized to promote and accelerate protein folding. In Prochlorococcus marinus (strain SARG / CCMP1375 / SS120), this protein is Chaperonin GroEL 1.